Reading from the N-terminus, the 151-residue chain is Prefoldin subunit 5 (151 aa).

Residues 15-35 adopt a coiled-coil conformation; sequence IDQLKALKEQADLEVNLLQDS.

This sequence belongs to the prefoldin subunit alpha family. As to quaternary structure, heterohexamer of two PFD-alpha type and four PFD-beta type subunits forming prefoldin co-chaperone complex. Interacts with PFD6. Binds to the DELLA protein GAI.

The protein resides in the cytoplasm. Its subcellular location is the nucleus. In terms of biological role, binds specifically to cytosolic chaperonin (c-CPN) and transfers target proteins to it. Binds to nascent polypeptide chain and promotes folding in an environment in which there are many competing pathways for nonnative proteins. Together with other chaperonins, contribute to the regulation of gene expression by modulating the spliceosome function on pre-mRNA splicing post-transcriptionally by acting as a co-chaperone of Hsp90 to control levels of LSM8. Required for the biogenesis of tubulins and for subsequent microtubules (MTs) organization and dynamicity. Necessary for tolerance to NaCl salt stress. Involved in the process leading to microtubules dissociation in response to gibberellic acid (GA) probably due to the DELLA proteins-mediated translocation of the prefoldin co-chaperone complex from the cytoplasm to the nucleus. Prevents cold acclimation (e.g. 7 days at 4 degrees Celsius) in a DELLA proteins-dependent manner by promoting nuclear proteasome-mediated HY5 degradation, thus modulating the expression of several genes and reducing anthocyanin biosynthesis, but seems not involved in constitutive freezing tolerance. Contributes to the GA-dependent regulation of PIN2 trafficking at the plasma membrane, thus influencing auxin flux. This chain is Prefoldin subunit 5, found in Arabidopsis thaliana (Mouse-ear cress).